The chain runs to 396 residues: Elongation factor Tu (396 aa).

Residues 10 to 206 (KPHVNVGTIG…ALDSYIPEPE (197 aa)) enclose the tr-type G domain. Residues 19–26 (GHVDHGKT) form a G1 region. 19–26 (GHVDHGKT) provides a ligand contact to GTP. T26 contributes to the Mg(2+) binding site. The G2 stretch occupies residues 60-64 (GITIN). The tract at residues 81 to 84 (DCPG) is G3. Residues 81-85 (DCPGH) and 136-139 (NKAD) contribute to the GTP site. The segment at 136–139 (NKAD) is G4. Residues 174 to 176 (SAL) form a G5 region.

Belongs to the TRAFAC class translation factor GTPase superfamily. Classic translation factor GTPase family. EF-Tu/EF-1A subfamily. In terms of assembly, monomer.

It is found in the cytoplasm. The catalysed reaction is GTP + H2O = GDP + phosphate + H(+). Its function is as follows. GTP hydrolase that promotes the GTP-dependent binding of aminoacyl-tRNA to the A-site of ribosomes during protein biosynthesis. This is Elongation factor Tu from Nitrosomonas europaea (strain ATCC 19718 / CIP 103999 / KCTC 2705 / NBRC 14298).